The primary structure comprises 159 residues: Nucleotide-binding protein PLES_47741 (159 aa).

It belongs to the YajQ family.

Its function is as follows. Nucleotide-binding protein. The protein is Nucleotide-binding protein PLES_47741 of Pseudomonas aeruginosa (strain LESB58).